Here is a 265-residue protein sequence, read N- to C-terminus: Glutamate racemase (265 aa).

Residues 12 to 13 (DS) and 44 to 45 (YG) contribute to the substrate site. Residue C75 is the Proton donor/acceptor of the active site. A substrate-binding site is contributed by 76-77 (NT). Catalysis depends on C186, which acts as the Proton donor/acceptor. 187–188 (TH) contributes to the substrate binding site.

This sequence belongs to the aspartate/glutamate racemases family.

It catalyses the reaction L-glutamate = D-glutamate. Its pathway is cell wall biogenesis; peptidoglycan biosynthesis. Provides the (R)-glutamate required for cell wall biosynthesis. The chain is Glutamate racemase from Pseudomonas putida (strain GB-1).